The chain runs to 498 residues: NADPH:adrenodoxin oxidoreductase, mitochondrial (498 aa).

Residues 1 to 37 constitute a mitochondrion transit peptide; the sequence is MSTHKAALCKVQILKLFLISARCVRITRFYGVCGLST. FAD contacts are provided by Ala-54, Glu-75, Leu-83, and Val-119. Residues 190-193, 234-235, and Glu-246 each bind NADP(+); these read QGNV and RR. FAD contacts are provided by residues Trp-404 and 411–413; that span reads GVI. Gly-411 provides a ligand contact to NADP(+). The span at 469–488 shows a compositional bias: basic and acidic residues; it reads DSEETRRGETRGKPREKMLD. The disordered stretch occupies residues 469-489; the sequence is DSEETRRGETRGKPREKMLDV.

This sequence belongs to the ferredoxin--NADP reductase type 1 family. Requires FAD as cofactor.

Its subcellular location is the mitochondrion inner membrane. The enzyme catalyses 2 reduced [adrenodoxin] + NADP(+) + H(+) = 2 oxidized [adrenodoxin] + NADPH. Its pathway is steroid metabolism; cholesterol metabolism. In terms of biological role, serves as the first electron transfer protein in all the mitochondrial P450 systems including cholesterol side chain cleavage in all steroidogenic tissues, steroid 11-beta hydroxylation in the adrenal cortex, 25-OH-vitamin D3-24 hydroxylation in the kidney, and sterol C-27 hydroxylation in the liver. The chain is NADPH:adrenodoxin oxidoreductase, mitochondrial (fdxr) from Salvelinus fontinalis (Brook trout).